Consider the following 130-residue polypeptide: Small ribosomal subunit protein uS8 (130 aa).

Belongs to the universal ribosomal protein uS8 family. As to quaternary structure, part of the 30S ribosomal subunit. Contacts proteins S5 and S12.

Functionally, one of the primary rRNA binding proteins, it binds directly to 16S rRNA central domain where it helps coordinate assembly of the platform of the 30S subunit. The polypeptide is Small ribosomal subunit protein uS8 (Klebsiella pneumoniae subsp. pneumoniae (strain ATCC 700721 / MGH 78578)).